Consider the following 156-residue polypeptide: MRRRRAPIREVMPDPIYGSKVVTKFINKLMWDGKKSTAQKIFYNALKLIEEKDKEAKGIDIFNEAIENVKPLLEVKSRRVGGATYQVPVEVRPVRQQSLAIRWIVDAARNRNERTMAERLANELLDAANKRGAAYKKKEDTYKMAEANKAFAHYRW.

Belongs to the universal ribosomal protein uS7 family. In terms of assembly, part of the 30S ribosomal subunit. Contacts proteins S9 and S11.

One of the primary rRNA binding proteins, it binds directly to 16S rRNA where it nucleates assembly of the head domain of the 30S subunit. Is located at the subunit interface close to the decoding center, probably blocks exit of the E-site tRNA. The polypeptide is Small ribosomal subunit protein uS7 (Nitratiruptor sp. (strain SB155-2)).